Consider the following 285-residue polypeptide: MDDVNTKTAAWADKRWQALLALDFSSRAGRTTLIGKRHQGPLVVQKMLYPEGDEVCHGIIIHPPGGVAGGDQLQLQATLEASARALLTTPGAGKWYKANQLSASQAVRFHLAANSCLEWLPQENILFDGSNVHFSSEIDLAEGAVFCGWDILCFGRQARGERWSEGELRQVMQVRREGRLIWNERLFAQPDSLVMRSGIGLKGMPVNGSLVVAAGTVPVEIIEACRAIEARGDAHYGVTALPEILSARYIGASSEAAKEYFERLWQVLRPWYAARPATRPRIWNT.

Belongs to the UreD family. As to quaternary structure, ureD, UreF and UreG form a complex that acts as a GTP-hydrolysis-dependent molecular chaperone, activating the urease apoprotein by helping to assemble the nickel containing metallocenter of UreC. The UreE protein probably delivers the nickel.

It localises to the cytoplasm. In terms of biological role, required for maturation of urease via the functional incorporation of the urease nickel metallocenter. In Methylobacillus flagellatus (strain ATCC 51484 / DSM 6875 / VKM B-1610 / KT), this protein is Urease accessory protein UreD.